The chain runs to 544 residues: Chaperonin GroEL 1 (544 aa).

Residues 29–32, 86–90, Gly-413, 482–484, and Asp-498 each bind ATP; these read TLGP, DGTTT, and NVL.

The protein belongs to the chaperonin (HSP60) family. In terms of assembly, forms a cylinder of 14 subunits composed of two heptameric rings stacked back-to-back. Interacts with the co-chaperonin GroES.

The protein localises to the cytoplasm. The enzyme catalyses ATP + H2O + a folded polypeptide = ADP + phosphate + an unfolded polypeptide.. Together with its co-chaperonin GroES, plays an essential role in assisting protein folding. The GroEL-GroES system forms a nano-cage that allows encapsulation of the non-native substrate proteins and provides a physical environment optimized to promote and accelerate protein folding. This chain is Chaperonin GroEL 1, found in Chloroflexus aurantiacus (strain ATCC 29366 / DSM 635 / J-10-fl).